The primary structure comprises 117 residues: Large ribosomal subunit protein bL20c (117 aa).

This sequence belongs to the bacterial ribosomal protein bL20 family.

The protein localises to the plastid. The protein resides in the chloroplast. Functionally, binds directly to 23S ribosomal RNA and is necessary for the in vitro assembly process of the 50S ribosomal subunit. It is not involved in the protein synthesizing functions of that subunit. This is Large ribosomal subunit protein bL20c from Olimarabidopsis pumila (Dwarf rocket).